A 276-amino-acid chain; its full sequence is Phosphonoacetaldehyde hydrolase (276 aa).

Asp19 functions as the Nucleophile in the catalytic mechanism. Residues Asp19 and Ala21 each contribute to the Mg(2+) site. The active-site Schiff-base intermediate with substrate is the Lys60. Position 193 (Asp193) interacts with Mg(2+).

The protein belongs to the HAD-like hydrolase superfamily. PhnX family. Homodimer. Mg(2+) is required as a cofactor.

It carries out the reaction phosphonoacetaldehyde + H2O = acetaldehyde + phosphate + H(+). Involved in phosphonate degradation. This chain is Phosphonoacetaldehyde hydrolase, found in Bordetella bronchiseptica (strain ATCC BAA-588 / NCTC 13252 / RB50) (Alcaligenes bronchisepticus).